Consider the following 348-residue polypeptide: Ileal sodium/bile acid cotransporter (348 aa).

Residues 1-28 (MNDPNSCVDNATVCSGASCVVPESNFNN) are Extracellular-facing. A glycan (N-linked (GlcNAc...) asparagine) is linked at N10. The helical transmembrane segment at 29-49 (ILSVVLSTVLTILLALVMFSM) threads the bilayer. Topologically, residues 50–82 (GCNVEIKKFLGHIKRPWGICVGFLCQFGIMPLT) are cytoplasmic. Residues 83-103 (GFILSVAFDILPLQAVVVLII) form a helical membrane-spanning segment. Topologically, residues 104-126 (GCCPGGTASNILAYWVDGDMDLS) are extracellular. The chain crosses the membrane as a helical span at residues 127–147 (VSMTTCSTLLALGMMPLCLLI). The Cytoplasmic segment spans residues 148–157 (YTKMWVDSGS). The chain crosses the membrane as a helical span at residues 158–178 (IVIPYDNIGTSLVSLVVPVSI). Residues 179–195 (GMFVNHKWPQKAKIILK) are Extracellular-facing. Residues 196–216 (IGSIAGAILIVLIAVVGGILY) traverse the membrane as a helical segment. Over 217-224 (QSAWIIAP) the chain is Cytoplasmic. A helical transmembrane segment spans residues 225–245 (KLWIIGTIFPVAGYSLGFLLA). Residues 246-284 (RIAGLPWYRCRTVAFETGMQNTQLCSTIVQLSFTPEELN) lie on the Extracellular side of the membrane. The helical transmembrane segment at 285–305 (VVFTFPLIYSIFQLAFAAIFL) threads the bilayer. Residues 306–348 (GFYVAYKKCHGKNKAEIPESKENGTEPESSFYKANGGFQPDEK) are Cytoplasmic-facing. The span at 320–329 (AEIPESKENG) shows a compositional bias: basic and acidic residues. The interval 320–348 (AEIPESKENGTEPESSFYKANGGFQPDEK) is disordered. Position 335 is a phosphoserine (S335).

Belongs to the bile acid:sodium symporter (BASS) (TC 2.A.28) family. As to quaternary structure, monomer and homodimer. Mainly expressed in ileum and kidney, lower expression in cecum.

Its subcellular location is the membrane. It catalyses the reaction taurocholate(out) + 2 Na(+)(out) = taurocholate(in) + 2 Na(+)(in). The catalysed reaction is cholate(out) + 2 Na(+)(out) = cholate(in) + 2 Na(+)(in). It carries out the reaction taurochenodeoxycholate(out) + 2 Na(+)(out) = taurochenodeoxycholate(in) + 2 Na(+)(in). The enzyme catalyses tauroursodeoxycholate(out) + 2 Na(+)(out) = tauroursodeoxycholate(in) + 2 Na(+)(in). It catalyses the reaction glycocholate(out) + 2 Na(+)(out) = glycocholate(in) + 2 Na(+)(in). The catalysed reaction is tauronorcholate(out) + 2 Na(+)(out) = tauronorcholate(in) + 2 Na(+)(in). It carries out the reaction tauroallocholate(out) + 2 Na(+)(out) = tauroallocholate(in) + 2 Na(+)(in). The enzyme catalyses taurodeoxycholate(out) + 2 Na(+)(out) = taurodeoxycholate(in) + 2 Na(+)(in). It catalyses the reaction tauro-beta-muricholate(out) + 2 Na(+)(out) = tauro-beta-muricholate(in) + 2 Na(+)(in). Its function is as follows. Plays a critical role in the sodium-dependent reabsorption of bile acids from the lumen of the small intestine. Transports various bile acids, unconjugated or conjugated, such as cholate and taurocholate. Also responsible for bile acid transport in the renal proximal tubules, a salvage mechanism that helps conserve bile acids. Works collaboratively with the Na(+)-taurocholate cotransporting polypeptide (NTCP), the organic solute transporter (OST), and the bile salt export pump (BSEP), to ensure efficacious biological recycling of bile acids during enterohepatic circulation. This Homo sapiens (Human) protein is Ileal sodium/bile acid cotransporter (SLC10A2).